The following is a 237-amino-acid chain: Purine nucleoside phosphorylase DeoD-type (237 aa).

His-4 serves as a coordination point for a purine D-ribonucleoside. Residues Gly-20, Arg-24, Arg-43, and 87–90 (RVGT) contribute to the phosphate site. A purine D-ribonucleoside contacts are provided by residues 179 to 181 (EME) and 203 to 204 (SD). The Proton donor role is filled by Asp-204.

The protein belongs to the PNP/UDP phosphorylase family. In terms of assembly, homohexamer; trimer of homodimers.

The catalysed reaction is a purine D-ribonucleoside + phosphate = a purine nucleobase + alpha-D-ribose 1-phosphate. The enzyme catalyses a purine 2'-deoxy-D-ribonucleoside + phosphate = a purine nucleobase + 2-deoxy-alpha-D-ribose 1-phosphate. Functionally, catalyzes the reversible phosphorolytic breakdown of the N-glycosidic bond in the beta-(deoxy)ribonucleoside molecules, with the formation of the corresponding free purine bases and pentose-1-phosphate. The sequence is that of Purine nucleoside phosphorylase DeoD-type from Streptococcus pyogenes serotype M12 (strain MGAS2096).